We begin with the raw amino-acid sequence, 228 residues long: uncharacterized protein (228 aa).

5 helical membrane passes run 14 to 34, 42 to 62, 130 to 150, 156 to 176, and 192 to 212; these read HTISIFLGYLLMGMTFGMLLA, VALFMSLFIYAGAIQFVAITL, FMFSISLLNHSYWIFGSLVGS, FSFDTQGMEFVMTAIFIVLFM, and IAIAVVCLALFGTEYFLLIAL.

This sequence belongs to the AzlC family.

It is found in the cell membrane. This is an uncharacterized protein from Helicobacter pylori (strain J99 / ATCC 700824) (Campylobacter pylori J99).